The sequence spans 107 residues: ATP-dependent Clp protease adapter protein ClpS (107 aa).

Belongs to the ClpS family. In terms of assembly, binds to the N-terminal domain of the chaperone ClpA.

Functionally, involved in the modulation of the specificity of the ClpAP-mediated ATP-dependent protein degradation. This is ATP-dependent Clp protease adapter protein ClpS from Syntrophus aciditrophicus (strain SB).